A 182-amino-acid polypeptide reads, in one-letter code: Early nodulin-like protein 10 (182 aa).

The first 20 residues, 1–20 (MSSVMMCCCLLLLFGLLSEG), serve as a signal peptide directing secretion. The 105-residue stretch at 21–125 (REILVGGKSN…GEKLRVVVLS (105 aa)) folds into the Phytocyanin domain. Asparagine 65 carries N-linked (GlcNAc...) asparagine glycosylation. The cysteines at positions 79 and 113 are disulfide-linked. Residues asparagine 129 and asparagine 148 are each glycosylated (N-linked (GlcNAc...) asparagine). A lipid anchor (GPI-anchor amidated asparagine) is attached at asparagine 157. A propeptide spans 158–182 (AHIMNKGSLNTAWSLLLLLPLGLLV) (removed in mature form).

The protein belongs to the early nodulin-like (ENODL) family. Mostly expressed in flowers, and, to a lower extent, in leaves, but barely in seedlings, stems, seeds and roots.

The protein resides in the cell membrane. May act as a carbohydrate transporter. This chain is Early nodulin-like protein 10, found in Arabidopsis thaliana (Mouse-ear cress).